Consider the following 279-residue polypeptide: Elongation factor Ts (279 aa).

The segment at 80-83 (TDFV) is involved in Mg(2+) ion dislocation from EF-Tu.

Belongs to the EF-Ts family.

The protein resides in the cytoplasm. In terms of biological role, associates with the EF-Tu.GDP complex and induces the exchange of GDP to GTP. It remains bound to the aminoacyl-tRNA.EF-Tu.GTP complex up to the GTP hydrolysis stage on the ribosome. This chain is Elongation factor Ts, found in Borreliella burgdorferi (strain ZS7) (Borrelia burgdorferi).